A 361-amino-acid chain; its full sequence is tRNA-specific 2-thiouridylase MnmA (361 aa).

ATP is bound by residues 10 to 17 (GMSGGVDS) and Met-36. The active-site Nucleophile is the Cys-104. Cys-104 and Cys-202 are disulfide-bonded. Gly-128 contributes to the ATP binding site. An interaction with tRNA region spans residues 152 to 154 (KDQ). The active-site Cysteine persulfide intermediate is the Cys-202. Positions 308–309 (RY) are interaction with tRNA.

This sequence belongs to the MnmA/TRMU family.

It is found in the cytoplasm. The catalysed reaction is S-sulfanyl-L-cysteinyl-[protein] + uridine(34) in tRNA + AH2 + ATP = 2-thiouridine(34) in tRNA + L-cysteinyl-[protein] + A + AMP + diphosphate + H(+). Its function is as follows. Catalyzes the 2-thiolation of uridine at the wobble position (U34) of tRNA, leading to the formation of s(2)U34. The protein is tRNA-specific 2-thiouridylase MnmA of Clostridioides difficile (strain 630) (Peptoclostridium difficile).